The sequence spans 368 residues: Aminomethyltransferase (368 aa).

This sequence belongs to the GcvT family. As to quaternary structure, the glycine cleavage system is composed of four proteins: P, T, L and H.

The catalysed reaction is N(6)-[(R)-S(8)-aminomethyldihydrolipoyl]-L-lysyl-[protein] + (6S)-5,6,7,8-tetrahydrofolate = N(6)-[(R)-dihydrolipoyl]-L-lysyl-[protein] + (6R)-5,10-methylene-5,6,7,8-tetrahydrofolate + NH4(+). Its function is as follows. The glycine cleavage system catalyzes the degradation of glycine. This is Aminomethyltransferase from Thermoanaerobacter sp. (strain X514).